Here is a 57-residue protein sequence, read N- to C-terminus: UPF0391 membrane protein NE0130 (57 aa).

A run of 2 helical transmembrane segments spans residues 1–21 and 33–53; these read MLKW…FGFR and FLFF…LLGI.

Belongs to the UPF0391 family.

It is found in the cell membrane. The protein is UPF0391 membrane protein NE0130 of Nitrosomonas europaea (strain ATCC 19718 / CIP 103999 / KCTC 2705 / NBRC 14298).